The primary structure comprises 882 residues: Alanine--tRNA ligase (882 aa).

Zn(2+) contacts are provided by His570, His574, Cys672, and His676.

This sequence belongs to the class-II aminoacyl-tRNA synthetase family. Zn(2+) is required as a cofactor.

Its subcellular location is the cytoplasm. The catalysed reaction is tRNA(Ala) + L-alanine + ATP = L-alanyl-tRNA(Ala) + AMP + diphosphate. In terms of biological role, catalyzes the attachment of alanine to tRNA(Ala) in a two-step reaction: alanine is first activated by ATP to form Ala-AMP and then transferred to the acceptor end of tRNA(Ala). Also edits incorrectly charged Ser-tRNA(Ala) and Gly-tRNA(Ala) via its editing domain. This is Alanine--tRNA ligase from Xanthomonas oryzae pv. oryzae (strain MAFF 311018).